A 502-amino-acid polypeptide reads, in one-letter code: Probable malate:quinone oxidoreductase (502 aa).

The protein belongs to the MQO family. FAD serves as cofactor.

The enzyme catalyses (S)-malate + a quinone = a quinol + oxaloacetate. It participates in carbohydrate metabolism; tricarboxylic acid cycle; oxaloacetate from (S)-malate (quinone route): step 1/1. The sequence is that of Probable malate:quinone oxidoreductase from Parasynechococcus marenigrum (strain WH8102).